We begin with the raw amino-acid sequence, 67 residues long: MVAFLELTSDVSQPFVIPSLSPVSQPSSRKNSDANVDDLNLAIANAALLDASASSRSHSRKNSLSLL.

S24 and S32 each carry phosphoserine.

Post-translationally, phosphorylated during meiosis. During meiosis, exists in both unphosphorylated and phosphorylated forms with the highest degree of phosphorylation occurring in mid-meiosis.

The protein localises to the prospore membrane. Required for efficient sporulation. The protein is Sporulation protein 24 of Saccharomyces cerevisiae (strain ATCC 204508 / S288c) (Baker's yeast).